The sequence spans 272 residues: Putative phosphatase BU028/BU029 (272 aa).

The active-site Nucleophile is Asp-8. Asp-8 serves as a coordination point for Mg(2+). Residue Leu-9 participates in phosphate binding. Asp-10 serves as a coordination point for Mg(2+). Phosphate is bound by residues 42 to 43 (SG) and Lys-191. Asp-214 contacts Mg(2+). Asn-217 is a phosphate binding site.

The protein belongs to the HAD-like hydrolase superfamily. Cof family. The cofactor is Mg(2+).

This chain is Putative phosphatase BU028/BU029, found in Buchnera aphidicola subsp. Acyrthosiphon pisum (strain APS) (Acyrthosiphon pisum symbiotic bacterium).